The sequence spans 85 residues: Large ribosomal subunit protein bL27 (85 aa).

The segment at 1 to 21 (MAHKKGVGSSRNGRDSDGQRL) is disordered.

The protein belongs to the bacterial ribosomal protein bL27 family.

The sequence is that of Large ribosomal subunit protein bL27 from Geobacter sp. (strain M21).